Here is a 353-residue protein sequence, read N- to C-terminus: Paraneoplastic antigen Ma1 homolog (353 aa).

It belongs to the PNMA family.

The protein localises to the nucleus. Its subcellular location is the nucleolus. This chain is Paraneoplastic antigen Ma1 homolog (PNMA1), found in Bos taurus (Bovine).